The primary structure comprises 339 residues: Replication factor C subunit 4 (339 aa).

Residue 49–56 participates in ATP binding; sequence GPPGTGKT.

This sequence belongs to the activator 1 small subunits family. As to quaternary structure, heterotetramer of subunits RFC2, RFC3, RFC4 and RFC5 that can form a complex with RFC1.

It is found in the nucleus. Its function is as follows. May be involved in DNA replication and thus regulate cell proliferation. This Arabidopsis thaliana (Mouse-ear cress) protein is Replication factor C subunit 4 (RFC4).